We begin with the raw amino-acid sequence, 312 residues long: Methionyl-tRNA formyltransferase (312 aa).

110–113 contacts (6S)-5,6,7,8-tetrahydrofolate; it reads SLLP.

Belongs to the Fmt family.

It carries out the reaction L-methionyl-tRNA(fMet) + (6R)-10-formyltetrahydrofolate = N-formyl-L-methionyl-tRNA(fMet) + (6S)-5,6,7,8-tetrahydrofolate + H(+). In terms of biological role, attaches a formyl group to the free amino group of methionyl-tRNA(fMet). The formyl group appears to play a dual role in the initiator identity of N-formylmethionyl-tRNA by promoting its recognition by IF2 and preventing the misappropriation of this tRNA by the elongation apparatus. The polypeptide is Methionyl-tRNA formyltransferase (Mycobacterium marinum (strain ATCC BAA-535 / M)).